A 191-amino-acid chain; its full sequence is HTH-type transcriptional regulator YjdC (191 aa).

The HTH tetR-type domain maps to 1–60; sequence MQREDVLGEALKLLELQGIANTTLEMVAERVDYPLDELRRFWPDKEAILYDALRYLSQQI.

This Escherichia coli (strain K12) protein is HTH-type transcriptional regulator YjdC (yjdC).